Here is a 206-residue protein sequence, read N- to C-terminus: Ras-related protein RABG3d (206 aa).

15–22 (GDSGVGKT) provides a ligand contact to GTP. Residues 37 to 45 (YKATIGADF) carry the Effector region motif. GTP is bound by residues 63–67 (DTAGQ), 125–128 (NKTD), and 158–159 (SA). Residues cysteine 204 and cysteine 206 are each lipidated (S-geranylgeranyl cysteine). At cysteine 206 the chain carries Cysteine methyl ester.

This sequence belongs to the small GTPase superfamily. Rab family.

It is found in the cell membrane. Intracellular vesicle trafficking and protein transport. The chain is Ras-related protein RABG3d (RABG3D) from Arabidopsis thaliana (Mouse-ear cress).